We begin with the raw amino-acid sequence, 114 residues long: Gamma-glutamylcyclotransferase family protein ytfP (114 aa).

The protein belongs to the gamma-glutamylcyclotransferase family.

The protein resides in the cytoplasm. May play a role in antibiotic biosynthesis. In Citrobacter rodentium (strain ICC168) (Citrobacter freundii biotype 4280), this protein is Gamma-glutamylcyclotransferase family protein ytfP (ytfP).